Consider the following 150-residue polypeptide: Large ribosomal subunit protein bL9 (150 aa).

This sequence belongs to the bacterial ribosomal protein bL9 family.

Binds to the 23S rRNA. This chain is Large ribosomal subunit protein bL9, found in Vibrio atlanticus (strain LGP32) (Vibrio splendidus (strain Mel32)).